Here is a 117-residue protein sequence, read N- to C-terminus: Large ribosomal subunit protein bL20 (117 aa).

It belongs to the bacterial ribosomal protein bL20 family.

Binds directly to 23S ribosomal RNA and is necessary for the in vitro assembly process of the 50S ribosomal subunit. It is not involved in the protein synthesizing functions of that subunit. The chain is Large ribosomal subunit protein bL20 from Leptospira biflexa serovar Patoc (strain Patoc 1 / Ames).